The chain runs to 339 residues: Methylthioribose-1-phosphate isomerase (339 aa).

Substrate-binding positions include 50 to 52 (RGA), arginine 84, and glutamine 186. Aspartate 227 serves as the catalytic Proton donor. 237–238 (NK) is a substrate binding site.

This sequence belongs to the eIF-2B alpha/beta/delta subunits family. MtnA subfamily.

It catalyses the reaction 5-(methylsulfanyl)-alpha-D-ribose 1-phosphate = 5-(methylsulfanyl)-D-ribulose 1-phosphate. Its pathway is amino-acid biosynthesis; L-methionine biosynthesis via salvage pathway; L-methionine from S-methyl-5-thio-alpha-D-ribose 1-phosphate: step 1/6. Functionally, catalyzes the interconversion of methylthioribose-1-phosphate (MTR-1-P) into methylthioribulose-1-phosphate (MTRu-1-P). This is Methylthioribose-1-phosphate isomerase from Sulfurihydrogenibium sp. (strain YO3AOP1).